A 126-amino-acid chain; its full sequence is Small ribosomal subunit protein uS13 (126 aa).

The interval 92–126 is disordered; sequence HRRGLPVRGQRTKTNARTRKGPKRTVAGKKKAGRK.

This sequence belongs to the universal ribosomal protein uS13 family. Part of the 30S ribosomal subunit. Forms a loose heterodimer with protein S19. Forms two bridges to the 50S subunit in the 70S ribosome.

Located at the top of the head of the 30S subunit, it contacts several helices of the 16S rRNA. In the 70S ribosome it contacts the 23S rRNA (bridge B1a) and protein L5 of the 50S subunit (bridge B1b), connecting the 2 subunits; these bridges are implicated in subunit movement. Contacts the tRNAs in the A and P-sites. This Kineococcus radiotolerans (strain ATCC BAA-149 / DSM 14245 / SRS30216) protein is Small ribosomal subunit protein uS13.